We begin with the raw amino-acid sequence, 273 residues long: HMP-PP phosphatase (273 aa).

D8 (nucleophile) is an active-site residue. Mg(2+) is bound by residues D8, D10, and D212.

It belongs to the HAD-like hydrolase superfamily. Cof family. It depends on Mg(2+) as a cofactor.

The catalysed reaction is 4-amino-2-methyl-5-(diphosphooxymethyl)pyrimidine + H2O = 4-amino-2-methyl-5-(phosphooxymethyl)pyrimidine + phosphate + H(+). Catalyzes the hydrolysis of 4-amino-2-methyl-5-hydroxymethylpyrimidine pyrophosphate (HMP-PP) to 4-amino-2-methyl-5-hydroxymethylpyrimidine phosphate (HMP-P). The polypeptide is HMP-PP phosphatase (Yersinia pseudotuberculosis serotype I (strain IP32953)).